We begin with the raw amino-acid sequence, 187 residues long: uncharacterized protein (187 aa).

Residues 6–66 (TDLAEQIFSA…QFAHRVFSMF (61 aa)) enclose the HTH tetR-type domain. Positions 29-48 (SMLKLAKEANVAAGTIYLYF) form a DNA-binding region, H-T-H motif.

This is an uncharacterized protein from Haemophilus influenzae (strain ATCC 51907 / DSM 11121 / KW20 / Rd).